Reading from the N-terminus, the 595-residue chain is Inactive serine/threonine-protein kinase PLK5 (595 aa).

The 253-residue stretch at 27–279 (YRRGKLIGKG…LDHLLQDDFF (253 aa)) folds into the Protein kinase domain. Residues 33–41 (IGKGAFSRC) and lysine 56 contribute to the ATP site. Catalysis depends on aspartate 150, which acts as the Proton acceptor. The segment at 326 to 350 (FTSKEASGPGEEGTEPDHMEAGNEE) is disordered. The span at 340–350 (EPDHMEAGNEE) shows a compositional bias: basic and acidic residues. 2 POLO box domains span residues 413 to 491 (WAPK…YMQR) and 509 to 595 (DISL…LQSV).

The protein belongs to the protein kinase superfamily. Ser/Thr protein kinase family. CDC5/Polo subfamily. Expressed in the cerebellum, eye and brain cortex (at protein level). Expressed in highly differentiated tissues, such as brain, eyes and ovary. Not detectable in proliferating tissues, such as the colon, spleen and placenta.

Its subcellular location is the nucleus. The protein resides in the nucleolus. It is found in the cytoplasm. Its function is as follows. Inactive serine/threonine-protein kinase that plays a role in cell cycle progression and neuronal differentiation. This Mus musculus (Mouse) protein is Inactive serine/threonine-protein kinase PLK5.